A 468-amino-acid polypeptide reads, in one-letter code: Secreted triacylglycerol lipase LIP7 (468 aa).

A signal peptide spans 1 to 21; that stretch reads MFPRQILVFAALGLCFALVAG. C125 and C295 form a disulfide bridge. S209 acts as the Nucleophile in catalysis. Catalysis depends on residues D355 and H389.

This sequence belongs to the AB hydrolase superfamily. Lipase family. Class Lip subfamily.

The protein resides in the secreted. It is found in the cell wall. It catalyses the reaction a triacylglycerol + H2O = a diacylglycerol + a fatty acid + H(+). It carries out the reaction a monoacylglycerol + H2O = glycerol + a fatty acid + H(+). The catalysed reaction is a diacylglycerol + H2O = a monoacylglycerol + a fatty acid + H(+). In terms of biological role, secreted lipase involved in Dandruff and seborrheic dermatitis (D/SD) probably via lipase-mediated breakdown of sebaceous lipids and release of irritating free fatty acids. Has triacylglycerol lipase activity and is able to hydrolyze triolein. Mostly converts monoolein to di- and triolein, while free fatty acids are only produced in low amounts. The polypeptide is Secreted triacylglycerol lipase LIP7 (Malassezia globosa (strain ATCC MYA-4612 / CBS 7966) (Dandruff-associated fungus)).